The following is a 224-amino-acid chain: Cytidylate kinase (224 aa).

G11–T19 is an ATP binding site.

The protein belongs to the cytidylate kinase family. Type 1 subfamily.

The protein resides in the cytoplasm. It carries out the reaction CMP + ATP = CDP + ADP. The enzyme catalyses dCMP + ATP = dCDP + ADP. The chain is Cytidylate kinase from Listeria monocytogenes serovar 1/2a (strain ATCC BAA-679 / EGD-e).